Consider the following 538-residue polypeptide: ESX-3 secretion system ATPase EccB3 (538 aa).

A compositionally biased stretch (basic and acidic residues) spans 1–16; it reads MTNQQHDHDFDHDRRS. The segment at 1–25 is disordered; that stretch reads MTNQQHDHDFDHDRRSFASRTPVNN. The chain crosses the membrane as a helical span at residues 75–95; sequence VLMGVLIVITGLIGSFVFSLI.

Belongs to the EccB family. In terms of assembly, part of the ESX-3 / type VII secretion system (T7SS), which is composed of cytosolic and membrane components. The ESX-3 membrane complex is composed of EccB3, EccC3, EccD3 and EccE3.

The protein resides in the cell inner membrane. Functionally, an ATPase. Part of the ESX-3 specialized secretion system, which is important for iron and zinc uptake or homeostasis. This chain is ESX-3 secretion system ATPase EccB3, found in Mycobacterium tuberculosis (strain CDC 1551 / Oshkosh).